A 391-amino-acid polypeptide reads, in one-letter code: 3-ketoacyl-CoA thiolase (391 aa).

Residue Cys90 is the Acyl-thioester intermediate of the active site. Residues His347 and Cys377 each act as proton acceptor in the active site.

Belongs to the thiolase-like superfamily. Thiolase family.

It carries out the reaction an acyl-CoA + acetyl-CoA = a 3-oxoacyl-CoA + CoA. The protein operates within lipid metabolism; fatty acid beta-oxidation. Its function is as follows. Involved in the degradation of long-chain fatty acids. The chain is 3-ketoacyl-CoA thiolase (fadA) from Bacillus subtilis (strain 168).